The sequence spans 254 residues: AA9 family lytic polysaccharide monooxygenase A (254 aa).

The signal sequence occupies residues 1-19 (MKYSILGLTALSFVASAAA). His20 serves as a coordination point for Cu(2+). The residue at position 20 (His20) is a Methylhistidine. Val28 serves as a coordination point for (1,4-beta-D-glucosyl)n. Residue Asn52 is glycosylated (N-linked (GlcNAc...) asparagine). An intrachain disulfide couples Cys60 to Cys186. (1,4-beta-D-glucosyl)n is bound by residues Val66, Val67, Asp77, and Asn86. His97 serves as a coordination point for Cu(2+). Asn129 is a glycosylation site (N-linked (GlcNAc...) asparagine). (1,4-beta-D-glucosyl)n is bound by residues Val148 and Arg159. Residues His166 and Gln181 each contribute to the O2 site. Tyr183 is a binding site for Cu(2+).

The protein belongs to the polysaccharide monooxygenase AA9 family. The cofactor is Cu(2+). The catalytically essential N-terminal histidine His-20 is post-translationally modified by methylation to prevent protonation of the histidine side chain, and protect the critical active site of the enzyme from oxidative damage.

The protein resides in the secreted. It carries out the reaction [(1-&gt;4)-beta-D-glucosyl]n+m + reduced acceptor + O2 = 4-dehydro-beta-D-glucosyl-[(1-&gt;4)-beta-D-glucosyl]n-1 + [(1-&gt;4)-beta-D-glucosyl]m + acceptor + H2O.. Its activity is regulated as follows. The polyphenol cinnamtannin B1 contained in methanolic extract of Cinnamomum cassia (cinnamon) acts as an inhibitor of catalytic activity. Its function is as follows. Lytic polysaccharide monooxygenase (LPMO) that depolymerizes crystalline and amorphous polysaccharides via the oxidation of scissile alpha- or beta-(1-4)-glycosidic bonds, yielding C1 or C4 oxidation product. Catalysis by LPMOs requires the reduction of the active-site copper from Cu(II) to Cu(I) by a reducing agent and H(2)O(2) or O(2) as a cosubstrate. Is able to cleave phosphoric acid swollen cellulose (PASC) in the presence of a reducing agent, yielding a range of cellooligosaccharides dominated by cellobiose and cellotriose. Activity is less sensitive to the reducing agent potential when cleaving xylan, suggesting that distinct catalytic mechanisms exist for xylan and glucan cleavage. This Panus similis (Lentinoid fungus) protein is AA9 family lytic polysaccharide monooxygenase A.